We begin with the raw amino-acid sequence, 440 residues long: Phosphatidylcholine-sterol acyltransferase (440 aa).

The N-terminal stretch at 1-24 (MGPPGSPWQWVPLLLGLLLPPAAP) is a signal peptide. The N-linked (GlcNAc...) asparagine glycan is linked to Asn44. Cys74 and Cys98 form a disulfide bridge. An N-linked (GlcNAc...) asparagine glycan is attached at Asn108. The Nucleophile role is filled by Ser205. N-linked (GlcNAc...) asparagine glycosylation occurs at Asn296. A disulfide bond links Cys337 and Cys380. Catalysis depends on charge relay system residues Asp369 and His401. N-linked (GlcNAc...) asparagine glycosylation is present at Asn408.

It belongs to the AB hydrolase superfamily. Lipase family. In terms of tissue distribution, most abundant in liver and cerebellum.

It localises to the secreted. The enzyme catalyses a sterol + a 1,2-diacyl-sn-glycero-3-phosphocholine = a sterol ester + a 1-acyl-sn-glycero-3-phosphocholine. APOA1 is the most potent activator in plasma. Also activated by APOE, APOC1 and APOA4. Functionally, central enzyme in the extracellular metabolism of plasma lipoproteins. Synthesized mainly in the liver and secreted into plasma where it converts cholesterol and phosphatidylcholines (lecithins) to cholesteryl esters and lysophosphatidylcholines on the surface of high and low density lipoproteins (HDLs and LDLs). The cholesterol ester is then transported back to the liver. Has a preference for plasma 16:0-18:2 or 18:O-18:2 phosphatidylcholines. Also produced in the brain by primary astrocytes, and esterifies free cholesterol on nascent APOE-containing lipoproteins secreted from glia and influences cerebral spinal fluid (CSF) APOE- and APOA1 levels. Together with APOE and the cholesterol transporter ABCA1, plays a key role in the maturation of glial-derived, nascent lipoproteins. Required for remodeling high-density lipoprotein particles into their spherical forms. This is Phosphatidylcholine-sterol acyltransferase (LCAT) from Papio anubis (Olive baboon).